The primary structure comprises 592 residues: Putative esterase (592 aa).

The chain crosses the membrane as a helical span at residues 12-32 (LTLIAYLSVLMGVSVYFYVLI). N68, N83, N95, N447, and N510 each carry an N-linked (GlcNAc...) asparagine; by host glycan. Residue H513 is the Charge relay system of the active site. Residue N528 is glycosylated (N-linked (GlcNAc...) asparagine; by host).

Belongs to the type-B carboxylesterase/lipase family.

The protein localises to the membrane. The catalysed reaction is a carboxylic ester + H2O = an alcohol + a carboxylate + H(+). In Spodoptera frugiperda (Fall armyworm), this protein is Putative esterase.